The primary structure comprises 37 residues: Large ribosomal subunit protein bL36 (37 aa).

Belongs to the bacterial ribosomal protein bL36 family.

The chain is Large ribosomal subunit protein bL36 from Solibacter usitatus (strain Ellin6076).